A 636-amino-acid polypeptide reads, in one-letter code: Putative lipase ATG15 (636 aa).

At M1–R19 the chain is on the cytoplasmic side. Residues L20–F42 form a helical; Signal-anchor for type II membrane protein membrane-spanning segment. The Lumenal segment spans residues S43 to M636. Residues N211, N233, N291, N315, and N477 are each glycosylated (N-linked (GlcNAc...) asparagine). The tract at residues G478–S500 is disordered. Positions T479–S500 are enriched in low complexity.

It belongs to the AB hydrolase superfamily. Lipase family. In terms of assembly, binds to both phosphatidylinositol (PI) and phosphatidylinositol 3,5-bisphosphate (PIP2).

Its subcellular location is the endosome. The protein resides in the multivesicular body membrane. It is found in the prevacuolar compartment membrane. It catalyses the reaction a triacylglycerol + H2O = a diacylglycerol + a fatty acid + H(+). In terms of biological role, lipase which is essential for lysis of subvacuolar cytoplasm to vacuole targeted bodies and intravacuolar autophagic bodies. Involved in the lysis of intravacuolar multivesicular body (MVB) vesicles. The intravacuolar membrane disintegration by ATG15 is critical to life span extension. Autophagy is required for proper vegetative growth, asexual/sexual reproduction, and full virulence. Autophagy is particularly involved in the biosynthesis of deoxynivalenol (DON), an important virulence determinant. The polypeptide is Putative lipase ATG15 (Gibberella zeae (strain ATCC MYA-4620 / CBS 123657 / FGSC 9075 / NRRL 31084 / PH-1) (Wheat head blight fungus)).